Here is a 444-residue protein sequence, read N- to C-terminus: Glutamate--tRNA ligase 1 (444 aa).

The 'HIGH' region signature appears at 8 to 18; that stretch reads PSPTGFLHVGN. Residues 239–243 carry the 'KMSKS' region motif; that stretch reads KISKR. Lysine 242 is an ATP binding site.

It belongs to the class-I aminoacyl-tRNA synthetase family. Glutamate--tRNA ligase type 1 subfamily. As to quaternary structure, monomer.

The protein localises to the cytoplasm. It catalyses the reaction tRNA(Glu) + L-glutamate + ATP = L-glutamyl-tRNA(Glu) + AMP + diphosphate. Functionally, catalyzes the attachment of glutamate to tRNA(Glu) in a two-step reaction: glutamate is first activated by ATP to form Glu-AMP and then transferred to the acceptor end of tRNA(Glu). The sequence is that of Glutamate--tRNA ligase 1 from Zymomonas mobilis subsp. mobilis (strain ATCC 31821 / ZM4 / CP4).